A 453-amino-acid polypeptide reads, in one-letter code: Tubulin beta-1 chain (453 aa).

GTP-binding residues include Gln-12, Glu-71, Ser-140, Gly-144, Thr-145, Gly-146, Asn-206, and Asn-228. Glu-71 contacts Mg(2+). The tract at residues 431–453 (TADGVEGYEEEGYENDHPEDDEE) is disordered. The segment covering 436 to 453 (EGYEEEGYENDHPEDDEE) has biased composition (acidic residues).

The protein belongs to the tubulin family. In terms of assembly, dimer of alpha and beta chains. A typical microtubule is a hollow water-filled tube with an outer diameter of 25 nm and an inner diameter of 15 nM. Alpha-beta heterodimers associate head-to-tail to form protofilaments running lengthwise along the microtubule wall with the beta-tubulin subunit facing the microtubule plus end conferring a structural polarity. Microtubules usually have 13 protofilaments but different protofilament numbers can be found in some organisms and specialized cells. It depends on Mg(2+) as a cofactor.

The protein localises to the cytoplasm. The protein resides in the cytoskeleton. In terms of biological role, tubulin is the major constituent of microtubules, a cylinder consisting of laterally associated linear protofilaments composed of alpha- and beta-tubulin heterodimers. Microtubules grow by the addition of GTP-tubulin dimers to the microtubule end, where a stabilizing cap forms. Below the cap, tubulin dimers are in GDP-bound state, owing to GTPase activity of alpha-tubulin. This chain is Tubulin beta-1 chain (TUBB), found in Chondrus crispus (Carrageen Irish moss).